Here is a 202-residue protein sequence, read N- to C-terminus: LexA repressor (202 aa).

A DNA-binding region (H-T-H motif) is located at residues 29–49; that stretch reads VREICTAVGLKSTSTVHSYLE. Catalysis depends on for autocatalytic cleavage activity residues Ser-125 and Lys-162.

Belongs to the peptidase S24 family. In terms of assembly, homodimer.

The enzyme catalyses Hydrolysis of Ala-|-Gly bond in repressor LexA.. In terms of biological role, represses a number of genes involved in the response to DNA damage (SOS response), including recA and lexA. In the presence of single-stranded DNA, RecA interacts with LexA causing an autocatalytic cleavage which disrupts the DNA-binding part of LexA, leading to derepression of the SOS regulon and eventually DNA repair. This is LexA repressor from Clostridium kluyveri (strain NBRC 12016).